Consider the following 259-residue polypeptide: Alpha-acetolactate decarboxylase (259 aa).

The protein belongs to the alpha-acetolactate decarboxylase family.

The enzyme catalyses (2S)-2-acetolactate + H(+) = (R)-acetoin + CO2. It participates in polyol metabolism; (R,R)-butane-2,3-diol biosynthesis; (R,R)-butane-2,3-diol from pyruvate: step 2/3. Its function is as follows. Converts acetolactate into acetoin, which can be excreted by the cells. This may be a mechanism for controlling the internal pH of cells in the stationary stage. In Raoultella terrigena (Klebsiella terrigena), this protein is Alpha-acetolactate decarboxylase (budA).